We begin with the raw amino-acid sequence, 530 residues long: FSD1-like protein (530 aa).

Methionine 1 is modified (N-acetylmethionine). The stretch at lysine 102–glutamate 141 forms a coiled coil. The COS domain occupies leucine 137–leucine 194. The 105-residue stretch at valine 196 to leucine 300 folds into the Fibronectin type-III domain. One can recognise a B30.2/SPRY domain in the interval leucine 300–alanine 506. The disordered stretch occupies residues tryptophan 322–arginine 366. A compositionally biased stretch (basic and acidic residues) spans glutamine 330 to glycine 341. Over residues arginine 342–glycine 354 the composition is skewed to polar residues. Serine 520 and serine 523 each carry phosphoserine.

The protein is FSD1-like protein (FSD1L) of Homo sapiens (Human).